The primary structure comprises 671 residues: UvrABC system protein C (671 aa).

Positions 16-95 (VEPGVYRFRD…IKEFDPRFNV (80 aa)) constitute a GIY-YIG domain. Positions 208–243 (DRLARDMEREMNQAAQELNFERAARLRDNISALQRA) constitute a UVR domain. Positions 645 to 671 (SSAPSSGATEAVLPAMVENGVDDTPST) are disordered.

Belongs to the UvrC family. In terms of assembly, interacts with UvrB in an incision complex.

It localises to the cytoplasm. In terms of biological role, the UvrABC repair system catalyzes the recognition and processing of DNA lesions. UvrC both incises the 5' and 3' sides of the lesion. The N-terminal half is responsible for the 3' incision and the C-terminal half is responsible for the 5' incision. This Mycobacteroides abscessus (strain ATCC 19977 / DSM 44196 / CCUG 20993 / CIP 104536 / JCM 13569 / NCTC 13031 / TMC 1543 / L948) (Mycobacterium abscessus) protein is UvrABC system protein C.